The following is a 232-amino-acid chain: Small ribosomal subunit protein uS3 (232 aa).

Positions 39–107 (VRQYLTKELK…PAQINIAEVR (69 aa)) constitute a KH type-2 domain.

Belongs to the universal ribosomal protein uS3 family. In terms of assembly, part of the 30S ribosomal subunit. Forms a tight complex with proteins S10 and S14.

Functionally, binds the lower part of the 30S subunit head. Binds mRNA in the 70S ribosome, positioning it for translation. This Aliivibrio fischeri (strain MJ11) (Vibrio fischeri) protein is Small ribosomal subunit protein uS3.